A 54-amino-acid chain; its full sequence is UPF0391 membrane protein R00741 (54 aa).

The next 2 membrane-spanning stretches (helical) occupy residues 5–25 (ALVF…GIAG) and 30–50 (IAQV…VAGL).

This sequence belongs to the UPF0391 family.

The protein resides in the cell membrane. In Rhizobium meliloti (strain 1021) (Ensifer meliloti), this protein is UPF0391 membrane protein R00741.